The chain runs to 453 residues: Autophagy-related protein 21 (453 aa).

One copy of the WD 1 repeat lies at L4–S137. Residues G177 to N207 are disordered. Positions S187–N198 are enriched in low complexity. 2 WD repeats span residues N252–D347 and F419–I453. The L/FRRG motif motif lies at F310 to S314.

Belongs to the WD repeat PROPPIN family.

The protein localises to the cytoplasm. It is found in the membrane. It localises to the vacuole membrane. Its function is as follows. Required for cytoplasm to vacuole transport (Cvt) vesicles formation and mitophagy. Involved in binding of phosphatidylethanolamine to ATG8 and in recruitment of ATG8 and ATG5 to the pre-autophagosomal structure. Protects ATG8 from ARG4-mediated cleavage. This Candida glabrata (strain ATCC 2001 / BCRC 20586 / JCM 3761 / NBRC 0622 / NRRL Y-65 / CBS 138) (Yeast) protein is Autophagy-related protein 21 (ATG21).